The following is a 447-amino-acid chain: Peptide-N(4)-(N-acetyl-beta-glucosaminyl)asparagine amidase (447 aa).

Zn(2+) contacts are provided by Cys209, Cys212, Cys241, and Cys244. The Nucleophile role is filled by Cys267. Catalysis depends on residues His294 and Asp311.

Belongs to the transglutaminase-like superfamily. PNGase family. Zn(2+) is required as a cofactor.

The protein localises to the cytoplasm. It catalyses the reaction Hydrolysis of an N(4)-(acetyl-beta-D-glucosaminyl)asparagine residue in which the glucosamine residue may be further glycosylated, to yield a (substituted) N-acetyl-beta-D-glucosaminylamine and a peptide containing an aspartate residue.. In terms of biological role, specifically deglycosylates the denatured form of N-linked glycoproteins in the cytoplasm and assists their proteasome-mediated degradation. Cleaves the beta-aspartyl-glucosamine (GlcNAc) of the glycan and the amide side chain of Asn, converting Asn to Asp. Prefers proteins containing high-mannose over those bearing complex type oligosaccharides. Can recognize misfolded proteins in the endoplasmic reticulum that are exported to the cytosol to be destroyed and deglycosylate them, while it has no activity toward native proteins. Deglycosylation is a prerequisite for subsequent proteasome-mediated degradation of some, but not all, misfolded glycoproteins. The polypeptide is Peptide-N(4)-(N-acetyl-beta-glucosaminyl)asparagine amidase (PNG1) (Oryza sativa subsp. japonica (Rice)).